The following is a 25-amino-acid chain: Small ribosomal subunit protein eS32 (25 aa).

Residues 1–25 are disordered; the sequence is MRAKWRKKRVRRLKRKRRKTRARSK.

This sequence belongs to the eukaryotic ribosomal protein eS32 family. In terms of assembly, component of the small ribosomal subunit.

This is Small ribosomal subunit protein eS32 (RPL41) from Quercus suber (Cork oak).